A 473-amino-acid chain; its full sequence is Probable serine/threonine-protein kinase glkA (473 aa).

The tract at residues 1-84 (MTIPTDNNSS…QSSSTATVNS (84 aa)) is disordered. Positions 7-84 (NNSSNNKGYN…QSSSTATVNS (78 aa)) are enriched in low complexity. The 276-residue stretch at 91–366 (YEIIKQVGQG…IDEIIAHPFL (276 aa)) folds into the Protein kinase domain. Residues 97–105 (VGQGTFGKV) and Lys119 contribute to the ATP site. Asp208 serves as the catalytic Proton acceptor. Disordered stretches follow at residues 389-418 (GKSSLTTNSTSSSSTTANMTSLASSSSNNK) and 437-473 (SSNLKSIDNSNNGKSSSSSNNIPSLNNSNNGVITNTI). A compositionally biased stretch (low complexity) spans 442–466 (SIDNSNNGKSSSSSNNIPSLNNSNN).

It belongs to the protein kinase superfamily. CMGC Ser/Thr protein kinase family. GSK-3 subfamily.

It catalyses the reaction L-seryl-[tau protein] + ATP = O-phospho-L-seryl-[tau protein] + ADP + H(+). It carries out the reaction L-threonyl-[tau protein] + ATP = O-phospho-L-threonyl-[tau protein] + ADP + H(+). This chain is Probable serine/threonine-protein kinase glkA (glkA), found in Dictyostelium discoideum (Social amoeba).